Here is a 966-residue protein sequence, read N- to C-terminus: Aminopeptidase N (966 aa).

Residues Met-1 to Ser-8 lie on the Cytoplasmic side of the membrane. Residues Lys-9–Val-32 form a helical; Signal-anchor for type II membrane protein membrane-spanning segment. Residues Tyr-33 to Asn-65 are cytosolic Ser/Thr-rich junction. Topologically, residues Tyr-33 to Ala-966 are extracellular. Asn-40 and Asn-125 each carry an N-linked (GlcNAc...) asparagine glycan. The interval Asn-40 to Thr-61 is disordered. Residues Leu-66–Ala-966 are metalloprotease. A Sulfotyrosine modification is found at Tyr-173. N-linked (GlcNAc...) asparagine glycosylation is found at Asn-259 and Asn-315. Gly-348–Asn-352 contacts substrate. His-384 provides a ligand contact to Zn(2+). Glu-385 acts as the Proton acceptor in catalysis. Zn(2+)-binding residues include His-388 and Glu-407. A sulfotyrosine mark is found at Tyr-415 and Tyr-420. N-linked (GlcNAc...) asparagine glycosylation is found at Asn-552, Asn-570, Asn-624, and Asn-734. 2 cysteine pairs are disulfide-bonded: Cys-760-Cys-767 and Cys-797-Cys-833. The N-linked (GlcNAc...) asparagine glycan is linked to Asn-817. Tyr-852 is modified (phosphotyrosine). A Sulfotyrosine modification is found at Tyr-912.

The protein belongs to the peptidase M1 family. As to quaternary structure, homodimer. Interacts with SLC6A19. The cofactor is Zn(2+). Post-translationally, sulfated. In terms of processing, N- and O-glycosylated. May undergo proteolysis and give rise to a soluble form.

The protein resides in the cell membrane. The enzyme catalyses Release of an N-terminal amino acid, Xaa-|-Yaa- from a peptide, amide or arylamide. Xaa is preferably Ala, but may be most amino acids including Pro (slow action). When a terminal hydrophobic residue is followed by a prolyl residue, the two may be released as an intact Xaa-Pro dipeptide.. Its function is as follows. Broad specificity aminopeptidase which plays a role in the final digestion of peptides generated from hydrolysis of proteins by gastric and pancreatic proteases. Also involved in the processing of various peptides including peptide hormones, such as angiotensin III and IV, neuropeptides, and chemokines. May also be involved the cleavage of peptides bound to major histocompatibility complex class II molecules of antigen presenting cells. May have a role in angiogenesis and promote cholesterol crystallization. May have a role in amino acid transport by acting as binding partner of amino acid transporter SLC6A19 and regulating its activity. In Oryctolagus cuniculus (Rabbit), this protein is Aminopeptidase N (ANPEP).